The primary structure comprises 453 residues: Bifunctional protein GlmU (453 aa).

The segment at Met1 to Lys225 is pyrophosphorylase. Residues Leu6–Gly9, Lys20, Gln71, Gly76–Thr77, Tyr98–Asp100, Gly135, Glu150, Asn165, and Asn223 each bind UDP-N-acetyl-alpha-D-glucosamine. Position 100 (Asp100) interacts with Mg(2+). Asn223 lines the Mg(2+) pocket. The interval Ala226 to Asp246 is linker. Residues Gly247–Ser453 form an N-acetyltransferase region. UDP-N-acetyl-alpha-D-glucosamine is bound by residues Arg329 and Lys347. His359 serves as the catalytic Proton acceptor. Residues Tyr362 and Asn373 each contribute to the UDP-N-acetyl-alpha-D-glucosamine site. Acetyl-CoA is bound by residues Ala376, Asn382–Tyr383, Ser401, and Ala419.

The protein in the N-terminal section; belongs to the N-acetylglucosamine-1-phosphate uridyltransferase family. This sequence in the C-terminal section; belongs to the transferase hexapeptide repeat family. In terms of assembly, homotrimer. The cofactor is Mg(2+).

The protein localises to the cytoplasm. The catalysed reaction is alpha-D-glucosamine 1-phosphate + acetyl-CoA = N-acetyl-alpha-D-glucosamine 1-phosphate + CoA + H(+). It catalyses the reaction N-acetyl-alpha-D-glucosamine 1-phosphate + UTP + H(+) = UDP-N-acetyl-alpha-D-glucosamine + diphosphate. Its pathway is nucleotide-sugar biosynthesis; UDP-N-acetyl-alpha-D-glucosamine biosynthesis; N-acetyl-alpha-D-glucosamine 1-phosphate from alpha-D-glucosamine 6-phosphate (route II): step 2/2. The protein operates within nucleotide-sugar biosynthesis; UDP-N-acetyl-alpha-D-glucosamine biosynthesis; UDP-N-acetyl-alpha-D-glucosamine from N-acetyl-alpha-D-glucosamine 1-phosphate: step 1/1. It participates in bacterial outer membrane biogenesis; LPS lipid A biosynthesis. Catalyzes the last two sequential reactions in the de novo biosynthetic pathway for UDP-N-acetylglucosamine (UDP-GlcNAc). The C-terminal domain catalyzes the transfer of acetyl group from acetyl coenzyme A to glucosamine-1-phosphate (GlcN-1-P) to produce N-acetylglucosamine-1-phosphate (GlcNAc-1-P), which is converted into UDP-GlcNAc by the transfer of uridine 5-monophosphate (from uridine 5-triphosphate), a reaction catalyzed by the N-terminal domain. The polypeptide is Bifunctional protein GlmU (Burkholderia orbicola (strain AU 1054)).